A 300-amino-acid polypeptide reads, in one-letter code: Protein FANTASTIC FOUR 4 (300 aa).

Polar residues predominate over residues proline 30 to alanine 56. Disordered regions lie at residues proline 30 to serine 104, threonine 142 to proline 170, and threonine 227 to glutamate 264. Composition is skewed to low complexity over residues serine 58–serine 88 and threonine 142–threonine 151. The FAF domain maps to serine 166 to isoleucine 217. A compositionally biased stretch (acidic residues) spans lysine 233–glutamate 262.

It belongs to the fantastic four family. In terms of tissue distribution, expressed in the shoot apex and young siliques. Detected in provascular and vascular tissue, but not in the vegetative meristem. In inflorescences, restricted to the base of the flower and to the vasculature of the stem and the pedicels, but absent from young flowers. Detected in the center of the inflorescence meristem.

In terms of biological role, regulates the size of the shoot meristem by modulating the CLV3-WUS feedback loop. Can repress WUS but is under negative control by CLV3. The protein is Protein FANTASTIC FOUR 4 (FAF4) of Arabidopsis thaliana (Mouse-ear cress).